Reading from the N-terminus, the 141-residue chain is Bombinins BLP-7/H-BO (141 aa).

A signal peptide spans 1–18 (MNFKYIIAVSFLIASTYA). Positions 19–43 (RSVKNDEQSLSQRDVLDEESLREIR) are excised as a propeptide. Residue Asn-70 is modified to Asparagine amide. A propeptide spanning residues 74–123 (TAEEHEVMKRLEAVMRDLDSLDHPEEASEKETRGFNQEEIANLFTKKEKR) is cleaved from the precursor. A Leucine amide modification is found at Leu-140.

Belongs to the bombinin family. As to expression, expressed by the skin glands.

It localises to the secreted. Its function is as follows. Antimicrobial peptide with activity against Gram-positive and -negative bacteria and fungi. Shows activity against P.acnes (MIC=5 uM), E.coli (MIC=5-6.3 uM), S.aureus (MIC=5-6.3 uM), M.luteus, S.cerevisiae and C.albicans (MIC=10-12.5 uM). Also reduces the production of interleukin (IL)-8 and granulocyte-macrophage colony stimulating factor (CSF2) in normal human epidermal keratinocytes (NHEKs). Shows anticancer activity against three human hepatoma cell lines. In vivo, using the rat ear edema model, suppress P.acnes-induced skin inflammation, significantly reducing the ear thickness. Shows weak hemolytic activity against human erythrocytes. Functionally, shows weak antimicrobial activity (tested on E.coli, S.aureus and C.albicans). Shows high hemolytic activity against human erythrocytes (38% erythrocyte lysis at 80.0 uM, and up to 85% at 159.7 uM). The protein is Bombinins BLP-7/H-BO of Bombina orientalis (Oriental fire-bellied toad).